Here is a 439-residue protein sequence, read N- to C-terminus: Amino-acid acetyltransferase (439 aa).

One can recognise an N-acetyltransferase domain in the interval E289–K429.

The protein belongs to the acetyltransferase family. ArgA subfamily.

It localises to the cytoplasm. The enzyme catalyses L-glutamate + acetyl-CoA = N-acetyl-L-glutamate + CoA + H(+). The protein operates within amino-acid biosynthesis; L-arginine biosynthesis; N(2)-acetyl-L-ornithine from L-glutamate: step 1/4. This is Amino-acid acetyltransferase from Mannheimia succiniciproducens (strain KCTC 0769BP / MBEL55E).